A 224-amino-acid chain; its full sequence is Ribonuclease T (224 aa).

Residues 1 to 11 (MSEDLYEDDQD) show a composition bias toward acidic residues. The interval 1 to 20 (MSEDLYEDDQDSQVSSGSRH) is disordered. The Exonuclease domain maps to 32 to 206 (VVVDVETGGF…YDTEKTAELF (175 aa)). The Mg(2+) site is built by Asp35, Glu37, His193, and Asp198. The active-site Proton donor/acceptor is the His193.

The protein belongs to the RNase T family. Homodimer. Mg(2+) is required as a cofactor.

Functionally, trims short 3' overhangs of a variety of RNA species, leaving a one or two nucleotide 3' overhang. Responsible for the end-turnover of tRNA: specifically removes the terminal AMP residue from uncharged tRNA (tRNA-C-C-A). Also appears to be involved in tRNA biosynthesis. The chain is Ribonuclease T from Pseudomonas entomophila (strain L48).